Consider the following 777-residue polypeptide: E3 UFM1-protein ligase 1 homolog (777 aa).

Over residues 396 to 417 (MKHQDPMDRDSAVGEGKADKRE) the composition is skewed to basic and acidic residues. The segment at 396–470 (MKHQDPMDRD…PSGGKKGGKD (75 aa)) is disordered.

Belongs to the UFL1 family.

Functionally, E3 UFM1-protein ligase that mediates ufmylation of target proteins. This is E3 UFM1-protein ligase 1 homolog from Aedes aegypti (Yellowfever mosquito).